The following is a 304-amino-acid chain: Acetyl-coenzyme A carboxylase carboxyl transferase subunit beta (304 aa).

The region spanning 25–294 (VWTKCDSCGQ…PSVVESKADT (270 aa)) is the CoA carboxyltransferase N-terminal domain. Residues Cys29, Cys32, Cys48, and Cys51 each contribute to the Zn(2+) site. The C4-type zinc-finger motif lies at 29–51 (CDSCGQVLYRAELERNLEVCPKC).

This sequence belongs to the AccD/PCCB family. In terms of assembly, acetyl-CoA carboxylase is a heterohexamer composed of biotin carboxyl carrier protein (AccB), biotin carboxylase (AccC) and two subunits each of ACCase subunit alpha (AccA) and ACCase subunit beta (AccD). Zn(2+) serves as cofactor.

It is found in the cytoplasm. The catalysed reaction is N(6)-carboxybiotinyl-L-lysyl-[protein] + acetyl-CoA = N(6)-biotinyl-L-lysyl-[protein] + malonyl-CoA. It functions in the pathway lipid metabolism; malonyl-CoA biosynthesis; malonyl-CoA from acetyl-CoA: step 1/1. Functionally, component of the acetyl coenzyme A carboxylase (ACC) complex. Biotin carboxylase (BC) catalyzes the carboxylation of biotin on its carrier protein (BCCP) and then the CO(2) group is transferred by the transcarboxylase to acetyl-CoA to form malonyl-CoA. This is Acetyl-coenzyme A carboxylase carboxyl transferase subunit beta from Yersinia pestis bv. Antiqua (strain Nepal516).